A 461-amino-acid chain; its full sequence is PTS system sucrose-specific EIIBC component (461 aa).

Residues 4–87 (KETAKRLIEL…SKEADIEREE (84 aa)) enclose the PTS EIIB type-1 domain. C26 functions as the Phosphocysteine intermediate; for EIIB activity in the catalytic mechanism. The PTS EIIC type-1 domain occupies 107 to 461 (KTLSNIFVPI…KINEDEERKK (355 aa)). 10 helical membrane passes run 112-132 (IFVP…LLGM), 148-168 (LLDM…GVSA), 178-198 (LGAV…WGLA), 208-228 (FGFD…LLAV), 248-268 (LLVT…IAIG), 289-309 (AGFV…LTGV), 329-349 (LLPI…AVFF), 359-379 (IALP…IFGV), 387-407 (FIAA…THVA), and 430-450 (LIHY…AAFV).

Its subcellular location is the cell membrane. It catalyses the reaction N(pros)-phospho-L-histidyl-[protein](out) + sucrose = sucrose 6(G)-phosphate(in) + L-histidyl-[protein]. The phosphoenolpyruvate-dependent sugar phosphotransferase system (sugar PTS), a major carbohydrate active transport system, catalyzes the phosphorylation of incoming sugar substrates concomitantly with their translocation across the cell membrane. This system is involved in sucrose transport. This Bacillus subtilis (strain 168) protein is PTS system sucrose-specific EIIBC component (sacP).